The sequence spans 452 residues: UPF0210 protein Cthe_0410 (452 aa).

The protein belongs to the UPF0210 family. As to quaternary structure, homodimer.

This is UPF0210 protein Cthe_0410 from Acetivibrio thermocellus (strain ATCC 27405 / DSM 1237 / JCM 9322 / NBRC 103400 / NCIMB 10682 / NRRL B-4536 / VPI 7372) (Clostridium thermocellum).